We begin with the raw amino-acid sequence, 523 residues long: MLSVDLPSVANLDPRIAAAAAGSAVAVYKLLQLGSRESFLPPGPPTRPVLGNAHLMTKMWLPMQLTEWAREYGEVYSLKLMNRTVIVLNSPKAVRTILDKQGNITGDRPFSPMISRYTEGLNLTVESMDTSVWKTGRKGIHNYLTPSALSGYVPRQEEESVNLMHDLLMDAPNRPIHIRRAMMSLLLHIVYGQPRCESYYGTVIENAYEAATRIGQIAHNGAAVDAFPFLDYIPRGFPGAGWKTIVDEFKDFRNSVYNSLLDGAKKAMDSGIRTGCFAESVIDHPDGRSWLELSNLSGGFLDAGAKTTISYIESCILALIAHPDCQRKIQDELDHVLGTETMPCFDDLERLPYLKAFLQEVLRLRPVGPVALPHVSRENLSYGGHVLPEGSMIFMNIWGMGHDPELFDEPEAFKPERYLLTSNGTKPGLSEDVNPDFLFGAGRRVCPGDKLAKRSTGLFIMRLCWAFNFYPDSSNKDTVKNMNMEDCYDKSVSLETLPLPFACKIEPRDKMKEDLIKEAFAAL.

The chain crosses the membrane as a helical span at residues 16–33 (IAAAAAGSAVAVYKLLQL). Asn82, Asn103, Asn122, Asn295, Asn379, and Asn423 each carry an N-linked (GlcNAc...) asparagine glycan. Cys446 is a binding site for heme.

This sequence belongs to the cytochrome P450 family. The cofactor is heme.

The protein localises to the membrane. It participates in secondary metabolite biosynthesis; terpenoid biosynthesis. In terms of biological role, cytochrome P450 monooxygenase; part of the gene cluster that mediates the biosynthesis of pleuromutilin, a tricyclic diterpene showing antibacterial properties. The geranylgeranyl diphosphate (GGPP) synthase ple4 catalyzes the first step in pleuromutilin biosynthesis. GGPP is then substrate of the premutilin synthase (PS) ple3 to yield premutilin. Premutilin synthase is a bifunctional enzyme composed of the fusion of a class II diterpene cyclase (DTC) and a class I diterpene synthase (DTS), with the corresponding domains and active sites containing characteristic aspartate-rich motifs. GGPP is first converted to mutildienyl-diphosphate (MPP) at the class II DTC site. MPP is subsequently further cyclized at the class I DTS site, followed by a 1,5-hydride shift and addition of water prior to terminating deprotonation, to yield premutilin. The cytochrome P450 monooxygenases ple5 and ple6 hydroxylate premutilin at C-11 and C-3, respectively, producing 11-hydroxypremutilin and 3-hydroxypremutilin. The combination of the actions of both ple5 and ple6 leads to the production of 3,11-dihydroxypremutilin. The short chain dehydrogenase ple7 further converts 3,11-dihydroxypremutilin into mutilin. The acetyltransferase ple2 then acetylates mutilin to produce 14-O-acetylmutilin. Finally, the cytochrome P450 monooxygenase ple1 catalyzes hydroxylation on the alpha position of the acetyl side chain of 14-O-acetylmutilin to yield pleuromutilin. This chain is Cytochrome P450 monooxygenase ple5B, found in Rhodocybe pseudopiperita (Clitopilus pseudopiperitus).